The primary structure comprises 608 residues: Protein SHQ1 homolog (608 aa).

2 disordered regions span residues 487 to 531 (DAGS…SFYS) and 543 to 608 (IVYE…ASTT). Over residues 489 to 498 (GSQGSSPQQQ) the composition is skewed to low complexity. 2 stretches are compositionally biased toward acidic residues: residues 502-524 (DDLD…DESV) and 543-579 (IVYE…EDDS). Over residues 588-608 (EAEGNSVIEQCSNSETAASTT) the composition is skewed to polar residues.

It belongs to the SHQ1 family.

Its function is as follows. Required for the quantitative accumulation of H/ACA ribonucleoproteins (RNPs). The polypeptide is Protein SHQ1 homolog (Drosophila melanogaster (Fruit fly)).